The following is an 882-amino-acid chain: ABC transporter H family member 4 (882 aa).

3 consecutive transmembrane segments (helical) span residues 4–24 (WIKL…ISVF), 35–55 (LLFK…LLPW), and 79–101 (TNGP…YAIL). The 480-residue stretch at 384-863 (FSYENKFSSE…NAQVYYKLLG (480 aa)) folds into the ABC transporter domain. 418-425 (GQNRSGKS) contributes to the ATP binding site. Disordered stretches follow at residues 522-617 (FDPD…YSTI), 634-669 (SMSQ…NSGV), and 710-730 (NSGG…NQRS). Low complexity-rich tracts occupy residues 528-617 (IPPT…YSTI) and 647-667 (NGNN…INNS). Acidic residues predominate over residues 715–724 (DESDDDDEEA).

It belongs to the ABC transporter superfamily. ABCH family.

It is found in the membrane. This is ABC transporter H family member 4 (abcH4) from Dictyostelium discoideum (Social amoeba).